A 95-amino-acid chain; its full sequence is Aspartyl/glutamyl-tRNA(Asn/Gln) amidotransferase subunit C (95 aa).

It belongs to the GatC family. Heterotrimer of A, B and C subunits.

The catalysed reaction is L-glutamyl-tRNA(Gln) + L-glutamine + ATP + H2O = L-glutaminyl-tRNA(Gln) + L-glutamate + ADP + phosphate + H(+). The enzyme catalyses L-aspartyl-tRNA(Asn) + L-glutamine + ATP + H2O = L-asparaginyl-tRNA(Asn) + L-glutamate + ADP + phosphate + 2 H(+). Allows the formation of correctly charged Asn-tRNA(Asn) or Gln-tRNA(Gln) through the transamidation of misacylated Asp-tRNA(Asn) or Glu-tRNA(Gln) in organisms which lack either or both of asparaginyl-tRNA or glutaminyl-tRNA synthetases. The reaction takes place in the presence of glutamine and ATP through an activated phospho-Asp-tRNA(Asn) or phospho-Glu-tRNA(Gln). In Alkalilimnicola ehrlichii (strain ATCC BAA-1101 / DSM 17681 / MLHE-1), this protein is Aspartyl/glutamyl-tRNA(Asn/Gln) amidotransferase subunit C.